The primary structure comprises 593 residues: Alanine--tRNA ligase (593 aa).

Zn(2+)-binding residues include histidine 456, histidine 460, cysteine 558, and histidine 562.

The protein belongs to the class-II aminoacyl-tRNA synthetase family. The cofactor is Zn(2+).

It is found in the cytoplasm. It catalyses the reaction tRNA(Ala) + L-alanine + ATP = L-alanyl-tRNA(Ala) + AMP + diphosphate. Functionally, catalyzes the attachment of alanine to tRNA(Ala) in a two-step reaction: alanine is first activated by ATP to form Ala-AMP and then transferred to the acceptor end of tRNA(Ala). Also edits incorrectly charged Ser-tRNA(Ala) and Gly-tRNA(Ala) via its editing domain. The chain is Alanine--tRNA ligase (alaS) from Borrelia hermsii (strain HS1 / DAH).